Consider the following 416-residue polypeptide: Orexin/Hypocretin receptor type 1 (416 aa).

Residues 1–22 are disordered; sequence MEPSATPGAQPGVPTSSGEPFH. At 1–46 the chain is on the extracellular side; sequence MEPSATPGAQPGVPTSSGEPFHLPPDYEDEFLRYLWRDYLYPKQYE. Residues 26-41 form a required for response to orexin-A region; it reads DYEDEFLRYLWRDYLY. A helical transmembrane segment spans residues 47–67; the sequence is WVLIAAYVAVFLIALVGNTLV. Residues 68-82 are Cytoplasmic-facing; the sequence is CLAVWRNHHMRTVTN. A helical membrane pass occupies residues 83-105; sequence YFIVNLSLADVLVTAICLPASLL. At 106–119 the chain is on the extracellular side; that stretch reads VDITESWLFGQALC. Cys119 and Cys202 are joined by a disulfide. Residues 120–140 form a helical membrane-spanning segment; it reads KVIPYLQAVSVSVAVLTLSFI. Residues 141–160 are Cytoplasmic-facing; it reads ALDRWYAICHPLLFKSTARR. A helical membrane pass occupies residues 161-182; the sequence is ARGSILGIWAVSLAVMVPQAAV. The Extracellular segment spans residues 183–213; it reads MECSSVLPELANRTRLFSVCDEHWADELYPK. Asn194 carries an N-linked (GlcNAc...) asparagine glycan. A helical membrane pass occupies residues 214–235; the sequence is IYHSCFFIVTYLAPLGLMAMAY. The Cytoplasmic portion of the chain corresponds to 236–298; it reads FQIFRKLWGR…QMRARRKTAK (63 aa). The helical transmembrane segment at 299-321 threads the bilayer; the sequence is MLMVVLLVFALCYLPISVLNVLK. Residues 322–336 lie on the Extracellular side of the membrane; it reads RVFGMFRQASDREAV. The helical transmembrane segment at 337-360 threads the bilayer; the sequence is YACFTFSHWLVYANSAANPIIYNF. Residues 361–416 are Cytoplasmic-facing; it reads LSGKFREQFKAAFSCCLPGLGPGSSARHKSLSLQSRCSVSKVSEHVVLTTVTTVLS.

It belongs to the G-protein coupled receptor 1 family. Widely expressed.

It is found in the cell membrane. In terms of biological role, moderately selective excitatory receptor for orexin-A and, with a lower affinity, for orexin-B neuropeptide. Triggers an increase in cytoplasmic Ca(2+) levels in response to orexin-A binding. This chain is Orexin/Hypocretin receptor type 1, found in Mus musculus (Mouse).